The chain runs to 91 residues: Small ribosomal subunit protein uS19 (91 aa).

The protein belongs to the universal ribosomal protein uS19 family.

In terms of biological role, protein S19 forms a complex with S13 that binds strongly to the 16S ribosomal RNA. This chain is Small ribosomal subunit protein uS19, found in Sulfurimonas denitrificans (strain ATCC 33889 / DSM 1251) (Thiomicrospira denitrificans (strain ATCC 33889 / DSM 1251)).